A 353-amino-acid polypeptide reads, in one-letter code: UDP-galactose transporter (353 aa).

6 helical membrane passes run 147 to 167, 184 to 204, 215 to 235, 254 to 274, 279 to 299, and 302 to 322; these read LGPM…IVQL, VTGF…GVYF, LWVR…FTIL, IVWL…LCVA, IMKN…SVYL, and FKIS…TFLY. A disordered region spans residues 325–353; that stretch reads PESKPSPSRGTYIPMTTQDAAAKDVDHKH. The segment covering 329 to 343 has biased composition (polar residues); sequence PSPSRGTYIPMTTQD.

The protein belongs to the nucleotide-sugar transporter family. SLC35A subfamily.

It localises to the golgi apparatus membrane. Essential for the transport of UDP-galactose into the lumen of Golgi apparatus. This is UDP-galactose transporter (gms1) from Schizosaccharomyces pombe (strain 972 / ATCC 24843) (Fission yeast).